Here is a 3414-residue protein sequence, read N- to C-terminus: Genome polyprotein (3414 aa).

The tract at residues 1-27 (MAGKAILKGKGGGPPRRVSKETAKKTR) is disordered. At 1 to 98 (MAGKAILKGK…LQKRGKRRST (98 aa)) the chain is on the cytoplasmic side. Residues 98 to 116 (TTDWTGWLLVAMLLSIALA) constitute a propeptide, ER anchor for the capsid protein C, removed in mature form by serine protease NS3. Residues 99-119 (TDWTGWLLVAMLLSIALAATV) traverse the membrane as a helical segment. The Extracellular portion of the chain corresponds to 120-242 (RKEGDGTTVI…HLTRVEGWVW (123 aa)). An N-linked (GlcNAc...) asparagine; by host glycan is attached at N144. Residues 243-260 (KNKSLTLAVVVIVWMTVE) traverse the membrane as a helical segment. Residue S261 is a topological domain, cytoplasmic. A helical membrane pass occupies residues 262–280 (AVTRIVIVSALLCLAPAYA). At 281–727 (SRCTHLENRD…HTVLGGAFNS (447 aa)) the chain is on the extracellular side. Disulfide bonds link C283-C310, C340-C396, C340-C401, C354-C385, C372-C396, and C372-C401. Positions 378 to 391 (DRGWGNHCGLFGKG) are fusion peptide. A glycan (N-linked (GlcNAc...) asparagine; by host) is linked at N434. Cystine bridges form between C466–C570 and C587–C618. The chain crosses the membrane as a helical span at residues 728 to 748 (VFGGVGFLPRILLGISLAWLG). At 749-755 (LNMRNPT) the chain is on the cytoplasmic side. Residues 756–776 (MSMSFLLAGGLVLTMTLGVGA) form a helical membrane-spanning segment. The Extracellular portion of the chain corresponds to 777-1132 (DVGCAVDTER…RSMVVADNGE (356 aa)). 6 cysteine pairs are disulfide-bonded: C780–C791, C831–C920, C955–C1000, C1057–C1106, C1068–C1090, and C1089–C1093. N861, N983, and N999 each carry an N-linked (GlcNAc...) asparagine; by host glycan. Residues 1133–1153 (LLSEGGIPGIVAVFVVLEYII) form a helical membrane-spanning segment. The Cytoplasmic segment spans residues 1154–1158 (RKRPS). The helical transmembrane segment at 1159 to 1179 (AGLTVVWGGVVVLALLVTGMV) threads the bilayer. The Lumenal portion of the chain corresponds to 1180 to 1187 (TLQSMLRY). Residues 1188–1208 (VIAVGVTFHLELGPEIVALML) form a helical membrane-spanning segment. Topologically, residues 1209–1236 (LQAVFELRVGLLGAFVLRRSLTTREVVT) are cytoplasmic. The chain crosses the membrane as a helical span at residues 1237 to 1257 (IYFLLLVLELGLPSANLEALW). Topologically, residues 1258–1293 (GWADALAMGAMIFRACTAEGKTGLGLLLVALMTQQN) are lumenal. Residues 1294-1314 (AVIVHQGLVIFLSVASACSVW) traverse the membrane as a helical segment. At 1315–1363 (KLLRGQREQKGLSWIVPLAGRLGGKGSGIRLLAFWELASRRDRRSFSEP) the chain is on the cytoplasmic side. Residues 1364 to 1381 (LTVVGVMLTLASGMMRHT) form a helical membrane-spanning segment. Position 1382 (S1382) is a topological domain, lumenal. A helical transmembrane segment spans residues 1383 to 1403 (QEALCALAAASFLLLMLVLGT). Topologically, residues 1404-1454 (RKMQLVAEWSGCVEWHPDLADEGGEISLRVRQDALGNFHLTELEKEERMMA) are cytoplasmic. An interacts with and activates NS3 protease region spans residues 1410-1449 (AEWSGCVEWHPDLADEGGEISLRVRQDALGNFHLTELEKE). An intramembrane region (helical) is located at residues 1455 to 1475 (FWLLAGLTASALHWTGILVVM). Residues 1476-2160 (GLWTMSEMLR…KMAERDAPEA (685 aa)) are Cytoplasmic-facing. Residues 1490–1669 (SDLVFSGQSG…EVEKSRPNLP (180 aa)) enclose the Peptidase S7 domain. Residues H1543, D1567, and S1627 each act as charge relay system; for serine protease NS3 activity in the active site. The Helicase ATP-binding domain occupies 1675-1831 (TGWTSKGTIT…ESNGAITSEE (157 aa)). 1688–1695 (MHPGSGKT) is an ATP binding site. Residues 1779 to 1782 (DEAH) carry the DEAH box motif. The Helicase C-terminal domain occupies 1841–2000 (DGFDWITEYE…TLRGPVATFY (160 aa)). The residue at position 1883 (K1883) is an N6-acetyllysine; by host. The helical transmembrane segment at 2161-2181 (FLTMVEMVVLGLATLGAVWCL) threads the bilayer. Over 2182-2189 (VLRTSISR) the chain is Lumenal. Residues 2190–2210 (MMLGTMVLLVSLALLWAGGVG) constitute an intramembrane region (helical). Residue Y2211 is a topological domain, lumenal. The chain crosses the membrane as a helical span at residues 2212–2232 (GSMAGVALVFYTLLTVLQPEA). At 2233-2244 (GKQRSSDDNKLA) the chain is on the cytoplasmic side. The helical transmembrane segment at 2245 to 2265 (YFLLTLCSLAGLVAANEMGFL) threads the bilayer. Residues 2266–2299 (EKTKADLSAVLWSEREEPRVWSEWTNIDIQPAKS) are Lumenal-facing. An intramembrane region (helical) is located at residues 2300–2320 (WGTYVLVVSLFTPYIIHQLQT). Topologically, residues 2321 to 2343 (RIQQLVNSAVASGAQAMRDLGGG) are lumenal. Positions 2344–2364 (TPFFGVAGHVLTLGVVSLVGA) form an intramembrane region, helical. At 2365 to 2368 (TPTS) the chain is on the lumenal side. The chain crosses the membrane as a helical span at residues 2369-2389 (LVVGVGLAAFHLAIVVSGLEA). At 2390 to 2432 (ELTQRAHKVFFSAMVRNPMVDGDVINPFGDGEVKPALYERKMS) the chain is on the cytoplasmic side. The chain crosses the membrane as a helical span at residues 2433 to 2453 (LILAMILCFMSVVLNRTVPAV). Residues 2454–2477 (TEASAVGLAAAGQLIRPEADTLWT) are Lumenal-facing. A helical transmembrane segment spans residues 2478–2498 (MPVACGLSGVVRGSLWGFLPL). The Cytoplasmic portion of the chain corresponds to 2499–3414 (GHRLWLRTSG…WELKVESSII (916 aa)). In terms of domain architecture, mRNA cap 0-1 NS5-type MT spans 2512-2776 (GGSEGDTLGD…EMDLGVGTRC (265 aa)). S2567 is an S-adenosyl-L-methionine binding site. Phosphoserine is present on S2567. K2572 serves as the catalytic For 2'-O-MTase activity. Residues G2597, W2598, T2615, I2616, and V2643 each coordinate S-adenosyl-L-methionine. D2657 serves as the catalytic For 2'-O-MTase activity. Residue I2658 coordinates S-adenosyl-L-methionine. Catalysis depends on for 2'-O-MTase activity residues K2694 and E2730. The interval 2730 to 2734 (EMYYS) is interaction with host SCRIB. Y2732 is an S-adenosyl-L-methionine binding site. Zn(2+) is bound by residues E2950, H2954, C2959, and C2962. The 150-residue stretch at 3040-3189 (GLFYADDTAG…RPIDDRFSKA (150 aa)) folds into the RdRp catalytic domain. Zn(2+)-binding residues include H3224, C3240, and C3359.

In the N-terminal section; belongs to the class I-like SAM-binding methyltransferase superfamily. mRNA cap 0-1 NS5-type methyltransferase family. As to quaternary structure, homodimer. In terms of assembly, forms heterodimers with envelope protein E in the endoplasmic reticulum and Golgi. Homodimer; in the endoplasmic reticulum and Golgi. As to quaternary structure, forms homodimers as well as homohexamers. NS1 may interact with NS4A. In terms of assembly, forms a heterodimer with serine protease NS3. May form homooligomers. Forms a heterodimer with NS2B. Interacts with NS4B. Interacts with unphosphorylated RNA-directed RNA polymerase NS5; this interaction stimulates RNA-directed RNA polymerase NS5 guanylyltransferase activity. As to quaternary structure, interacts with serine protease NS3. In terms of assembly, interacts with host STAT2; this interaction inhibits the phosphorylation of the latter, and, when all viral proteins are present (polyprotein), targets STAT2 for degradation. Specific enzymatic cleavages in vivo yield mature proteins. Cleavages in the lumen of endoplasmic reticulum are performed by host signal peptidase, whereas cleavages in the cytoplasmic side are performed by serine protease NS3. Signal cleavage at the 2K-4B site requires a prior NS3 protease-mediated cleavage at the 4A-2K site. Post-translationally, cleaved in post-Golgi vesicles by a host furin, releasing the mature small envelope protein M, and peptide pr. This cleavage is incomplete as up to 30% of viral particles still carry uncleaved prM. In terms of processing, N-glycosylated. N-glycosylated. The excreted form is glycosylated and this is required for efficient secretion of the protein from infected cells. Post-translationally, acetylated by host KAT5. Acetylation modulates NS3 RNA-binding and unwinding activities and plays an important positive role for viral replication. In terms of processing, phosphorylated on serines residues. This phosphorylation may trigger NS5 nuclear localization.

It localises to the virion. It is found in the host nucleus. The protein resides in the host cytoplasm. The protein localises to the host perinuclear region. Its subcellular location is the secreted. It localises to the virion membrane. It is found in the host endoplasmic reticulum membrane. It catalyses the reaction Selective hydrolysis of -Xaa-Xaa-|-Yaa- bonds in which each of the Xaa can be either Arg or Lys and Yaa can be either Ser or Ala.. It carries out the reaction RNA(n) + a ribonucleoside 5'-triphosphate = RNA(n+1) + diphosphate. The enzyme catalyses a ribonucleoside 5'-triphosphate + H2O = a ribonucleoside 5'-diphosphate + phosphate + H(+). The catalysed reaction is ATP + H2O = ADP + phosphate + H(+). It catalyses the reaction a 5'-end (5'-triphosphoguanosine)-ribonucleoside in mRNA + S-adenosyl-L-methionine = a 5'-end (N(7)-methyl 5'-triphosphoguanosine)-ribonucleoside in mRNA + S-adenosyl-L-homocysteine. It carries out the reaction a 5'-end (N(7)-methyl 5'-triphosphoguanosine)-ribonucleoside in mRNA + S-adenosyl-L-methionine = a 5'-end (N(7)-methyl 5'-triphosphoguanosine)-(2'-O-methyl-ribonucleoside) in mRNA + S-adenosyl-L-homocysteine + H(+). Functionally, plays a role in virus budding by binding to the cell membrane and gathering the viral RNA into a nucleocapsid that forms the core of a mature virus particle. During virus entry, may induce genome penetration into the host cytoplasm after hemifusion induced by the surface proteins. Can migrate to the cell nucleus where it modulates host functions. Inhibits RNA silencing by interfering with host Dicer. In terms of biological role, prevents premature fusion activity of envelope proteins in trans-Golgi by binding to envelope protein E at pH6.0. After virion release in extracellular space, gets dissociated from E dimers. Its function is as follows. Acts as a chaperone for envelope protein E during intracellular virion assembly by masking and inactivating envelope protein E fusion peptide. prM is the only viral peptide matured by host furin in the trans-Golgi network probably to avoid catastrophic activation of the viral fusion activity in acidic Golgi compartment prior to virion release. prM-E cleavage is inefficient, and many virions are only partially matured. These uncleaved prM would play a role in immune evasion. Functionally, may play a role in virus budding. Exerts cytotoxic effects by activating a mitochondrial apoptotic pathway through M ectodomain. May display a viroporin activity. Binds to host cell surface receptor and mediates fusion between viral and cellular membranes. Envelope protein is synthesized in the endoplasmic reticulum in the form of heterodimer with protein prM. They play a role in virion budding in the ER, and the newly formed immature particle is covered with 60 spikes composed of heterodimer between precursor prM and envelope protein E. The virion is transported to the Golgi apparatus where the low pH causes dissociation of PrM-E heterodimers and formation of E homodimers. prM-E cleavage is inefficient, and many virions are only partially matured. These uncleaved prM would play a role in immune evasion. In terms of biological role, involved in immune evasion, pathogenesis and viral replication. Once cleaved off the polyprotein, is targeted to three destinations: the viral replication cycle, the plasma membrane and the extracellular compartment. Essential for viral replication. Required for formation of the replication complex and recruitment of other non-structural proteins to the ER-derived membrane structures. Excreted as a hexameric lipoparticle that plays a role against host immune response. Antagonizing the complement function. Binds to the host macrophages and dendritic cells. Inhibits signal transduction originating from Toll-like receptor 3 (TLR3). Its function is as follows. Component of the viral RNA replication complex that functions in virion assembly and antagonizes the host immune response. Functionally, required cofactor for the serine protease function of NS3. May have membrane-destabilizing activity and form viroporins. Displays three enzymatic activities: serine protease, NTPase and RNA helicase. NS3 serine protease, in association with NS2B, performs its autocleavage and cleaves the polyprotein at dibasic sites in the cytoplasm: C-prM, NS2A-NS2B, NS2B-NS3, NS3-NS4A, NS4A-2K and NS4B-NS5. NS3 RNA helicase binds RNA and unwinds dsRNA in the 3' to 5' direction. In terms of biological role, regulates the ATPase activity of the NS3 helicase activity. NS4A allows NS3 helicase to conserve energy during unwinding. Its function is as follows. Functions as a signal peptide for NS4B and is required for the interferon antagonism activity of the latter. Functionally, induces the formation of ER-derived membrane vesicles where the viral replication takes place. Inhibits interferon (IFN)-induced host STAT1 phosphorylation and nuclear translocation, thereby preventing the establishment of cellular antiviral state by blocking the IFN-alpha/beta pathway. Inhibits STAT2 translocation in the nucleus after IFN-alpha treatment. Replicates the viral (+) and (-) RNA genome, and performs the capping of genomes in the cytoplasm. NS5 methylates viral RNA cap at guanine N-7 and ribose 2'-O positions. Besides its role in RNA genome replication, also prevents the establishment of cellular antiviral state by blocking the interferon-alpha/beta (IFN-alpha/beta) signaling pathway. Inhibits host TYK2 and STAT2 phosphorylation, thereby preventing activation of JAK-STAT signaling pathway. The polypeptide is Genome polyprotein (Homo sapiens (Human)).